The chain runs to 3177 residues: Inositol 1,4,5-trisphosphate receptor-like protein A (3177 aa).

Residues 1-1175 are Cytoplasmic-facing; the sequence is MEEKNVNLKT…NNGFPTSHRP (1175 aa). A disordered region spans residues 62-125; the sequence is KKAKRKLQQQ…NGTTNANGEN (64 aa). The segment covering 79-125 has biased composition (low complexity); the sequence is NNTNSSSGGGNSNNNNNNNSNSSNNNNSSNNNNNNNNNGTTNANGEN. 289-293 contributes to the 1D-myo-inositol 1,4,5-trisphosphate binding site; it reads KTTFT. 3 stretches are compositionally biased toward low complexity: residues 329–341, 351–405, and 570–608; these read QQKD…QQQQ, LKQS…NNSN, and ATTT…NNNN. 2 disordered regions span residues 329 to 405 and 570 to 609; these read QQKD…NNSN and ATTT…NNNI. Residues 608 to 611 and 692 to 694 each bind 1D-myo-inositol 1,4,5-trisphosphate; these read NIDK and NIK. Positions 947 to 963 are enriched in low complexity; that stretch reads NISISSNNPISTTNTTT. Disordered stretches follow at residues 947–983, 1009–1049, and 1063–1121; these read NISI…PSYG, TSLN…NTNS, and PQQN…QQNS. Positions 964-973 are enriched in gly residues; the sequence is GSGGGGGGSG. Residues 1066-1081 show a composition bias toward low complexity; the sequence is NNNSNNNNNNNILNSI. The span at 1082-1106 shows a compositional bias: polar residues; it reads PTSPIVGSTNHGQLSHSGSNQTPLY. Over residues 1107-1119 the composition is skewed to low complexity; the sequence is QQQQQQQQQQQQQ. Residues 1176–1196 traverse the membrane as a helical segment; it reads QLAFFHKILIAVGYAFKFGFF. Residues 1197 to 2723 lie on the Lumenal side of the membrane; sequence RKKERVLLKR…SYYLVSHTDK (1527 aa). Asn1275 carries an N-linked (GlcNAc...) asparagine glycan. Low complexity predominate over residues 1443–1458; sequence QPQHSQQQQQQHQQQP. The interval 1443–1490 is disordered; sequence QPQHSQQQQQQHQQQPINISGSIDESSSTIPPLTTTTTTTTTTTTTTT. Residues 1459–1475 are compositionally biased toward polar residues; that stretch reads INISGSIDESSSTIPPL. N-linked (GlcNAc...) asparagine glycosylation is present at Asn1460. Over residues 1476 to 1490 the composition is skewed to low complexity; it reads TTTTTTTTTTTTTTT. 19 N-linked (GlcNAc...) asparagine glycosylation sites follow: Asn1591, Asn1662, Asn1678, Asn1722, Asn1725, Asn1730, Asn1731, Asn1736, Asn1745, Asn1748, Asn1768, Asn1827, Asn1833, Asn1967, Asn2035, Asn2048, Asn2057, Asn2106, and Asn2124. Low complexity predominate over residues 1715–1739; it reads ITNTPTNNNSNNSNNNNTTNNNGTI. The segment at 1715 to 1751 is disordered; the sequence is ITNTPTNNNSNNSNNNNTTNNNGTISHRHSNSTNTTQ. Residues 2050 to 2061 show a composition bias toward basic and acidic residues; that stretch reads TEHPNSRNRTET. Positions 2050 to 2069 are disordered; sequence TEHPNSRNRTETIDSSNSSP. The segment covering 2125–2136 has biased composition (low complexity); it reads NSNNGNNNNNNN. The interval 2125-2188 is disordered; that stretch reads NSNNGNNNNN…NSGKGGSTIS (64 aa). Gly residues predominate over residues 2137–2146; the sequence is NGGGGNGNGG. Positions 2169–2180 are enriched in low complexity; that stretch reads RNNSNISDISNS. Asn2170, Asn2173, Asn2370, Asn2377, Asn2392, and Asn2644 each carry an N-linked (GlcNAc...) asparagine glycan. The chain crosses the membrane as a helical span at residues 2724–2744; sequence FKFLSFFLALIINLLLIIYSI. Over 2745–2769 the chain is Cytoplasmic; the sequence is NSPPDLKQFKSDISDDYGIASWWAG. A helical membrane pass occupies residues 2770 to 2790; that stretch reads FLPLTILQTICCILACVGFFL. Topologically, residues 2791-2853 are lumenal; sequence RKGPVLLYQN…TDLKAVYNIL (63 aa). A helical transmembrane segment spans residues 2854-2874; it reads AVICSVLGIIYSPYFFAFHIF. The Cytoplasmic segment spans residues 2875–2896; the sequence is QFSLNTKALSLVLKAITMNKKT. Residues 2897 to 2917 form a helical membrane-spanning segment; the sequence is LLVMGVFILQAIYLLSIFSFV. The Lumenal segment spans residues 2918 to 2995; sequence WFQEHYKDDD…VSARIIGWTV (78 aa). An N-linked (GlcNAc...) asparagine glycan is attached at Asn2967. Residues 2996–3016 traverse the membrane as a helical segment; that stretch reads FNVAFYVVISLILLNVILGII. Residues 3017-3177 are Cytoplasmic-facing; it reads VDTFGQLRDQ…QVSDLKQQQK (161 aa). A coiled-coil region spans residues 3118-3177; sequence IENANRKKEESIDQHAKLLDDVEKKITHNISTQFNQSISLLIDEIKNLRQQVSDLKQQQK.

It belongs to the InsP3 receptor family.

The protein resides in the endoplasmic reticulum membrane. In terms of biological role, may be a receptor for inositol 1,4,5 trisphosphate which governs calcium fluxes from the endoplasmic reticulum stores into the cytosol. May be involved in autophagic cell death. The polypeptide is Inositol 1,4,5-trisphosphate receptor-like protein A (iplA) (Dictyostelium discoideum (Social amoeba)).